Reading from the N-terminus, the 591-residue chain is Probable acetolactate synthase large subunit (591 aa).

Glu47 contacts thiamine diphosphate. FAD is bound by residues Arg149, 258–279 (HGTKAANYAVTECDVLIAIGCR), and 301–320 (DIDPAEIGKNVRADIPIVGD). The interval 396 to 476 (QNQMWMAHFF…VVICIFDNRT (81 aa)) is thiamine pyrophosphate binding. 2 residues coordinate Mg(2+): Asp447 and Asn474.

It belongs to the TPP enzyme family. As to quaternary structure, dimer of large and small chains. The cofactor is Mg(2+). Requires thiamine diphosphate as cofactor.

The enzyme catalyses 2 pyruvate + H(+) = (2S)-2-acetolactate + CO2. The protein operates within amino-acid biosynthesis; L-isoleucine biosynthesis; L-isoleucine from 2-oxobutanoate: step 1/4. It functions in the pathway amino-acid biosynthesis; L-valine biosynthesis; L-valine from pyruvate: step 1/4. The sequence is that of Probable acetolactate synthase large subunit (ilvB) from Methanocaldococcus jannaschii (strain ATCC 43067 / DSM 2661 / JAL-1 / JCM 10045 / NBRC 100440) (Methanococcus jannaschii).